The following is a 245-amino-acid chain: 3-dehydroquinate dehydratase (245 aa).

3-dehydroquinate-binding positions include 35 to 37 (EFR) and R70. H132 functions as the Proton donor/acceptor in the catalytic mechanism. Catalysis depends on K158, which acts as the Schiff-base intermediate with substrate. 3-dehydroquinate contacts are provided by R199, T220, and Q224.

This sequence belongs to the type-I 3-dehydroquinase family. As to quaternary structure, homodimer.

It carries out the reaction 3-dehydroquinate = 3-dehydroshikimate + H2O. It participates in metabolic intermediate biosynthesis; chorismate biosynthesis; chorismate from D-erythrose 4-phosphate and phosphoenolpyruvate: step 3/7. Involved in the third step of the chorismate pathway, which leads to the biosynthesis of aromatic amino acids. Catalyzes the cis-dehydration of 3-dehydroquinate (DHQ) and introduces the first double bond of the aromatic ring to yield 3-dehydroshikimate. The chain is 3-dehydroquinate dehydratase from Haloquadratum walsbyi (strain DSM 16790 / HBSQ001).